The primary structure comprises 276 residues: Large ribosomal subunit protein uL2 (276 aa).

The interval 211–276 is disordered; that stretch reads RNRHRGIRPQ…KLIISRRKGK (66 aa). Over residues 230-240 the composition is skewed to basic and acidic residues; sequence DHPHGGGEGKK.

This sequence belongs to the universal ribosomal protein uL2 family. As to quaternary structure, part of the 50S ribosomal subunit. Forms a bridge to the 30S subunit in the 70S ribosome.

In terms of biological role, one of the primary rRNA binding proteins. Required for association of the 30S and 50S subunits to form the 70S ribosome, for tRNA binding and peptide bond formation. It has been suggested to have peptidyltransferase activity; this is somewhat controversial. Makes several contacts with the 16S rRNA in the 70S ribosome. The protein is Large ribosomal subunit protein uL2 of Campylobacter jejuni subsp. doylei (strain ATCC BAA-1458 / RM4099 / 269.97).